The primary structure comprises 219 residues: UPF0502 protein GSU0233 (219 aa).

The protein belongs to the UPF0502 family.

In Geobacter sulfurreducens (strain ATCC 51573 / DSM 12127 / PCA), this protein is UPF0502 protein GSU0233.